The primary structure comprises 200 residues: A-type ATP synthase subunit E 3 (200 aa).

The protein belongs to the V-ATPase E subunit family. As to quaternary structure, has multiple subunits with at least A(3), B(3), C, D, E, F, H, I and proteolipid K(x).

It localises to the cell membrane. Component of the A-type ATP synthase that produces ATP from ADP in the presence of a proton gradient across the membrane. This chain is A-type ATP synthase subunit E 3, found in Methanospirillum hungatei JF-1 (strain ATCC 27890 / DSM 864 / NBRC 100397 / JF-1).